The primary structure comprises 358 residues: Methylthioribose-1-phosphate isomerase (358 aa).

Residues 54-56 (RGA), Arg96, and Gln205 each bind substrate. Asp246 serves as the catalytic Proton donor. Residue 256-257 (SK) coordinates substrate.

The protein belongs to the eIF-2B alpha/beta/delta subunits family. MtnA subfamily.

It catalyses the reaction 5-(methylsulfanyl)-alpha-D-ribose 1-phosphate = 5-(methylsulfanyl)-D-ribulose 1-phosphate. The protein operates within amino-acid biosynthesis; L-methionine biosynthesis via salvage pathway; L-methionine from S-methyl-5-thio-alpha-D-ribose 1-phosphate: step 1/6. Its function is as follows. Catalyzes the interconversion of methylthioribose-1-phosphate (MTR-1-P) into methylthioribulose-1-phosphate (MTRu-1-P). The chain is Methylthioribose-1-phosphate isomerase from Pseudomonas putida (strain GB-1).